A 368-amino-acid chain; its full sequence is 4-hydroxy-3-methylbut-2-en-1-yl diphosphate synthase (flavodoxin) (368 aa).

[4Fe-4S] cluster contacts are provided by Cys-268, Cys-271, Cys-303, and Glu-310.

The protein belongs to the IspG family. It depends on [4Fe-4S] cluster as a cofactor.

The catalysed reaction is (2E)-4-hydroxy-3-methylbut-2-enyl diphosphate + oxidized [flavodoxin] + H2O + 2 H(+) = 2-C-methyl-D-erythritol 2,4-cyclic diphosphate + reduced [flavodoxin]. It participates in isoprenoid biosynthesis; isopentenyl diphosphate biosynthesis via DXP pathway; isopentenyl diphosphate from 1-deoxy-D-xylulose 5-phosphate: step 5/6. In terms of biological role, converts 2C-methyl-D-erythritol 2,4-cyclodiphosphate (ME-2,4cPP) into 1-hydroxy-2-methyl-2-(E)-butenyl 4-diphosphate. The sequence is that of 4-hydroxy-3-methylbut-2-en-1-yl diphosphate synthase (flavodoxin) from Listeria monocytogenes serovar 1/2a (strain ATCC BAA-679 / EGD-e).